Consider the following 483-residue polypeptide: E3 ubiquitin-protein ligase TRIM50 (483 aa).

An RING-type zinc finger spans residues 16-57 (CPICLEVFKEPLMLQCGHSYCKNCLDSLSEHLDSELRCPVCR). The B box-type zinc-finger motif lies at 84–125 (TEPTVCVHHRNPLSLFCEKDQEFICGLCGLLGSHQHHRVTPV). Positions 89, 92, 111, and 117 each coordinate Zn(2+). Coiled-coil stretches lie at residues 127–169 (TVYS…NESD) and 203–236 (GLVA…GNES). The B30.2/SPRY domain occupies 275-474 (DIKLTVWKRL…LPMVLPPPSA (200 aa)). Position 372 is an N6-acetyllysine (Lys372).

This sequence belongs to the TRIM/RBCC family. Can form dimers and trimers. Interacts with several E2 ubiquitin-conjugating enzymes, including UBE2L6, UBE2E1, UBE2E3. No interaction with UBE2H. Interacts with BECN1. Interacts with SQSTM1. Interacts with NLRP3. Post-translationally, auto-ubiquitinated. In terms of processing, acetylated by EP300 and KAT2B. HDAC6 drives TRIM50 deacetylation. Acetylation antagonizes with TRIM50 ubiquitination.

The protein resides in the cytoplasm. It catalyses the reaction S-ubiquitinyl-[E2 ubiquitin-conjugating enzyme]-L-cysteine + [acceptor protein]-L-lysine = [E2 ubiquitin-conjugating enzyme]-L-cysteine + N(6)-ubiquitinyl-[acceptor protein]-L-lysine.. E3 ubiquitin-protein ligase that ubiquitinates Beclin-1/BECN1 in a 'Lys-63'-dependent manner enhancing its binding to ULK1. In turn, promotes starvation-induced autophagy activation. Also interacts with p62/SQSTM1 protein and thereby induces the formation and the autophagy clearance of aggresome-associated polyubiquitinated proteins through HDAC6 interaction. Also promotes NLRP3 inflammasome activation by directly inducing NLRP3 oligomerization independent of its E3 ligase function. The protein is E3 ubiquitin-protein ligase TRIM50 (Trim50) of Rattus norvegicus (Rat).